Consider the following 303-residue polypeptide: MDKYNLIIGSHVSLKAKDFFYGSVKEALSYGSNTFMVYTGAPQNTKRQPIKSFKIEEAHNLLKKHNINLDDLIVHAPYIINPCSSKKNVRELAKEFLIQEIQRTESMGITKLVLHPGSRLEQNEDIALEQVYTMLNDIFSTINTNVIVCLETMAGKGSEIGVNIKQLKTIIDNVHSKKNIGVCLDTCHMNDSGLILDYYNFNQYLKEFDAQIGINYIKVLHINDSKNPCGANKDRHENLGYGTIGFANLINIIYHPLLNNIPKILETPWFNVNDELIPLYKHEIKMIRDCKWYDIKNKLLSKK.

Zn(2+)-binding residues include His75, His115, Glu151, Asp185, His188, His221, Asp234, His236, and Glu266.

Belongs to the AP endonuclease 2 family. It depends on Zn(2+) as a cofactor.

It carries out the reaction Endonucleolytic cleavage to 5'-phosphooligonucleotide end-products.. Functionally, endonuclease IV plays a role in DNA repair. It cleaves phosphodiester bonds at apurinic or apyrimidinic (AP) sites, generating a 3'-hydroxyl group and a 5'-terminal sugar phosphate. This is Probable endonuclease 4 from Ureaplasma parvum serovar 3 (strain ATCC 700970).